The chain runs to 318 residues: Mitochondrial coenzyme A transporter SLC25A42 (318 aa).

3 Solcar repeats span residues 31–117 (RQVL…YKRI), 129–214 (LPPW…LKSL), and 224–312 (PYPF…MQIL). 6 helical membrane passes run 33-53 (VLSSLLSGALAGALAKTAVAP), 89-109 (LWRGNSATMVRVVPYAAIQFS), 135-155 (LFAGALAGTTAASLTYPLDLV), 186-206 (LYHGFMPTVLGVIPYAGLSFF), 230-250 (MIFGACAGLIGQSASYPLDVV), and 293-313 (VKGPIAVGISFTTFDLMQILL).

The protein belongs to the mitochondrial carrier (TC 2.A.29) family.

It localises to the mitochondrion inner membrane. It catalyses the reaction ADP(out) + CoA(in) = ADP(in) + CoA(out). It carries out the reaction 3'-dephospho-CoA(in) + ADP(out) = 3'-dephospho-CoA(out) + ADP(in). The enzyme catalyses adenosine 3',5'-bisphosphate(in) + ADP(out) = adenosine 3',5'-bisphosphate(out) + ADP(in). The catalysed reaction is AMP(in) + ADP(out) = AMP(out) + ADP(in). It catalyses the reaction dADP(in) + ADP(out) = dADP(out) + ADP(in). It carries out the reaction ADP(in) + ATP(out) = ADP(out) + ATP(in). In terms of biological role, mitochondrial carrier mediating the transport of coenzyme A (CoA) in mitochondria in exchange for intramitochondrial (deoxy)adenine nucleotides and adenosine 3',5'-diphosphate. This is Mitochondrial coenzyme A transporter SLC25A42 (SLC25A42) from Homo sapiens (Human).